The chain runs to 327 residues: Tryptophan--tRNA ligase (327 aa).

ATP is bound by residues 9–11 (QPS) and 17–18 (GN). Residues 10–18 (PSGDIHIGN) carry the 'HIGH' region motif. Aspartate 132 serves as a coordination point for L-tryptophan. ATP-binding positions include 144-146 (GED), isoleucine 183, and 192-196 (KMSKS). The short motif at 192–196 (KMSKS) is the 'KMSKS' region element.

Belongs to the class-I aminoacyl-tRNA synthetase family. In terms of assembly, homodimer.

It is found in the cytoplasm. It carries out the reaction tRNA(Trp) + L-tryptophan + ATP = L-tryptophyl-tRNA(Trp) + AMP + diphosphate + H(+). In terms of biological role, catalyzes the attachment of tryptophan to tRNA(Trp). The protein is Tryptophan--tRNA ligase of Caldanaerobacter subterraneus subsp. tengcongensis (strain DSM 15242 / JCM 11007 / NBRC 100824 / MB4) (Thermoanaerobacter tengcongensis).